Here is a 610-residue protein sequence, read N- to C-terminus: Peptidyl-prolyl cis-trans isomerase 9 (610 aa).

A Phosphoserine modification is found at Ser-13. WD repeat units follow at residues 45-83 (MHNA…VEYI), 88-127 (AHNA…LVNI), and 177-216 (KHTA…QKPD). The PPIase cyclophilin-type domain maps to 453-607 (LGKAAIIHTT…EPTKIINISI (155 aa)).

Belongs to the cyclophilin-type PPIase family.

It is found in the nucleus. The catalysed reaction is [protein]-peptidylproline (omega=180) = [protein]-peptidylproline (omega=0). PPIases accelerate the folding of proteins. It catalyzes the cis-trans isomerization of proline imidic peptide bonds in oligopeptides. The protein is Peptidyl-prolyl cis-trans isomerase 9 (cyp9) of Schizosaccharomyces pombe (strain 972 / ATCC 24843) (Fission yeast).